Consider the following 506-residue polypeptide: Tabersonine 6,7-epoxidase isoform 1 (506 aa).

A helical transmembrane segment spans residues 1–21; the sequence is MEFVVSLFAFVVSCFILLKVA. Residues asparagine 173 and asparagine 261 are each glycosylated (N-linked (GlcNAc...) asparagine). Position 441 (cysteine 441) interacts with heme.

The protein belongs to the cytochrome P450 family. Heme serves as cofactor. As to expression, mainly expressed in roots.

Its subcellular location is the endoplasmic reticulum membrane. It catalyses the reaction (-)-tabersonine + reduced [NADPH--hemoprotein reductase] + O2 = lochnericine + oxidized [NADPH--hemoprotein reductase] + H2O + H(+). It participates in alkaloid biosynthesis. Component of the monoterpenoid indole alkaloids (MIAs, e.g. echitovenine, tabersonine, lochnericine, 19-hydroxytabersonine and horhammericine) biosynthetic pathway; MIAs are used in cancer treatment and other medical applications. Cytochrome P450 catalyzing the conversion of tabersonine to lochnericine. The polypeptide is Tabersonine 6,7-epoxidase isoform 1 (Catharanthus roseus (Madagascar periwinkle)).